The following is a 692-amino-acid chain: Methionine--tRNA ligase (692 aa).

Residues 12-22 (PYANGPLHLGH) carry the 'HIGH' region motif. Zn(2+) contacts are provided by Cys-143, Cys-146, Cys-156, and Cys-159. The short motif at 330–334 (KMSKS) is the 'KMSKS' region element. Lys-333 provides a ligand contact to ATP. Over residues 554-563 (AAAAPAAKPA) the composition is skewed to low complexity. Positions 554–575 (AAAAPAAKPAAPAPAPAPAKDE) are disordered. Positions 589-692 (DFAKLDLRIG…SGAQPGMPVR (104 aa)) constitute a tRNA-binding domain.

This sequence belongs to the class-I aminoacyl-tRNA synthetase family. MetG type 1 subfamily. As to quaternary structure, homodimer. The cofactor is Zn(2+).

It localises to the cytoplasm. It catalyses the reaction tRNA(Met) + L-methionine + ATP = L-methionyl-tRNA(Met) + AMP + diphosphate. Is required not only for elongation of protein synthesis but also for the initiation of all mRNA translation through initiator tRNA(fMet) aminoacylation. The protein is Methionine--tRNA ligase of Stenotrophomonas maltophilia (strain K279a).